The chain runs to 644 residues: Threonine--tRNA ligase (644 aa).

In terms of domain architecture, TGS spans 1 to 61 (MINVTLPDGS…DGDAQVAIIT (61 aa)). The interval 243–536 (DHRKLGKQME…LIESYAGKLP (294 aa)) is catalytic. Residues C336, H387, and H513 each coordinate Zn(2+).

Belongs to the class-II aminoacyl-tRNA synthetase family. Homodimer. The cofactor is Zn(2+).

It localises to the cytoplasm. It catalyses the reaction tRNA(Thr) + L-threonine + ATP = L-threonyl-tRNA(Thr) + AMP + diphosphate + H(+). In terms of biological role, catalyzes the attachment of threonine to tRNA(Thr) in a two-step reaction: L-threonine is first activated by ATP to form Thr-AMP and then transferred to the acceptor end of tRNA(Thr). Also edits incorrectly charged L-seryl-tRNA(Thr). This is Threonine--tRNA ligase from Maricaulis maris (strain MCS10) (Caulobacter maris).